Here is an 883-residue protein sequence, read N- to C-terminus: Glutamate receptor 2 (883 aa).

Positions 1-24 (MQKIMHISVLLSPILWGLIFGVSS) are cleaved as a signal peptide. Over 25-543 (NSIQIGGLFP…GVFSFLDPLA (519 aa)) the chain is Extracellular. Residues C78 and C330 are joined by a disulfide bond. N-linked (GlcNAc...) asparagine glycans are attached at residues N256, N370, N406, and N413. 3 residues coordinate L-glutamate: P499, T501, and R506. The chain crosses the membrane as a helical span at residues 544-564 (YEIWMCIVFAYIGVSVVLFLV). Topologically, residues 565-591 (SRFSPYEWHTEEFEDGRETQSSESTNE) are cytoplasmic. The helical; Pore-forming intramembrane region spans 592–607 (FGIFNSLWFSLGAFMR). Residues 608–610 (QGC) lie within the membrane without spanning it. C610 carries S-palmitoyl cysteine lipidation. At 611-616 (DISPRS) the chain is on the cytoplasmic side. Residues 617–637 (LSGRIVGGVWWFFTLIIISSY) form a helical membrane-spanning segment. Residues 638-812 (TANLAAFLTV…EKTSALSLSN (175 aa)) lie on the Extracellular side of the membrane. Residues S675 and T676 each contribute to the L-glutamate site. Phosphoserine; by PKC is present on S683. S717 is subject to Phosphoserine; by PKG. E726 lines the L-glutamate pocket. C739 and C794 are oxidised to a cystine. The helical transmembrane segment at 813–833 (VAGVFYILVGGLGLAMLVALI) threads the bilayer. Residues 834-883 (EFCYKSRAEAKRMKVAKNAQNINPSSSQNSQNFATYKEGYNVYGIESVKI) are Cytoplasmic-facing. C836 carries the S-palmitoyl cysteine lipid modification. Phosphoserine occurs at positions 860 and 863. The tract at residues 867 to 877 (ATYKEGYNVYG) is required for interaction with IQSEC1. At Y876 the chain carries Phosphotyrosine. Phosphoserine is present on S880.

It belongs to the glutamate-gated ion channel (TC 1.A.10.1) family. GRIA2 subfamily. In terms of assembly, homotetramer or heterotetramer of pore-forming glutamate receptor subunits. Tetramers may be formed by the dimerization of dimers. May interact with MPP4. Forms a ternary complex with GRIP1 and CSPG4. Interacts with ATAD1 in an ATP-dependent manner. ATAD1-catalyzed ATP hydrolysis disrupts binding to ATAD1 and to GRIP1 and leads to AMPAR complex disassembly. Interacts with GRIP1 and GRIP2. Interacts with NSF via its C-terminus. Isoform 1, but not isoform 3, interacts with PICK1. Interacts with CACNG2. Interacts with GRIA1 and SYNDIG1. Part of a complex containing GRIA2, NSF and NAPA and/or NAPB. Interacts with SNX27 (via PDZ domain); the interaction is required for recycling to the plasma membrane when endocytosed and prevent degradation in lysosomes. Interacts with LRFN1. Found in a complex with GRIA1, GRIA3, GRIA4, CNIH2, CNIH3, CACNG2, CACNG3, CACNG4, CACNG5, CACNG7 and CACNG8. Interacts with CACNG5. Interacts with OLFM2. Interacts with AP4B1, AP4E1 and AP4M1; probably indirect it mediates the somatodendritic localization of GRIA2 in neurons. Forms a complex with GRIP1, NSG1 and STX12; controls the intracellular fate of AMPAR and the endosomal sorting of the GRIA2 subunit toward recycling and membrane targeting. Interacts with IQSEC1; the interaction is required for ARF6 activation. Interacts (heterotetramer form) with CNIH2 and CNIH3; this interaction promotes expression at the plasma membrane and extensively modulates their gating properties by slowing deactivation and desensitization kinetics. Phosphorylation at Tyr-876 is required for interaction with IQSEC1 and ARF6 activation, which in turn triggers AMPAR internalization for persistent synaptic depression. In terms of processing, palmitoylated. Depalmitoylated upon L-glutamate stimulation. ZDHHC3/GODZ specifically palmitoylates Cys-610, which leads to Golgi retention and decreased cell surface expression. In contrast, Cys-836 palmitoylation does not affect cell surface expression but regulates stimulation-dependent endocytosis. Post-translationally, N-glycosylated. Ubiquitinated by RNF167, leading to its degradation.

The protein localises to the cell membrane. Its subcellular location is the postsynaptic cell membrane. The protein resides in the postsynaptic density membrane. It catalyses the reaction Ca(2+)(in) = Ca(2+)(out). The enzyme catalyses Na(+)(in) = Na(+)(out). In terms of biological role, ionotropic glutamate receptor that functions as a ligand-gated cation channel, gated by L-glutamate and glutamatergic agonists such as alpha-amino-3-hydroxy-5-methyl-4-isoxazolepropionic acid (AMPA), quisqualic acid, and kainic acid. L-glutamate acts as an excitatory neurotransmitter at many synapses in the central nervous system and plays an important role in fast excitatory synaptic transmission. Binding of the excitatory neurotransmitter L-glutamate induces a conformation change, leading to the opening of the cation channel, and thereby converts the chemical signal to an electrical impulse upon entry of monovalent and divalent cations such as sodium and calcium. The receptor then desensitizes rapidly and enters in a transient inactive state, characterized by the presence of bound agonist. In the presence of CACNG4 or CACNG7 or CACNG8, shows resensitization which is characterized by a delayed accumulation of current flux upon continued application of L-glutamate. Through complex formation with NSG1, GRIP1 and STX12 controls the intracellular fate of AMPAR and the endosomal sorting of the GRIA2 subunit toward recycling and membrane targeting. The sequence is that of Glutamate receptor 2 from Macaca fascicularis (Crab-eating macaque).